The primary structure comprises 959 residues: Glutamate receptor 3.4 (959 aa).

Residues 1–35 form the signal peptide; that stretch reads MGFLVMIREVSMAKAIRVVLLCVSVLWVVPKECAC. The Extracellular portion of the chain corresponds to 36–613; that stretch reads RSNFSRNSSS…SPWSFLKPFT (578 aa). 9 N-linked (GlcNAc...) asparagine glycosylation sites follow: N38, N42, N108, N365, N378, N404, N443, N461, and N576. Residues 614–634 form a helical membrane-spanning segment; it reads IEMWAVTGGFFLFVGAMVWIL. Over 635–643 the chain is Cytoplasmic; that stretch reads EHRFNQEFR. Residues 644-664 traverse the membrane as a helical segment; it reads GPPRRQLITIFWFSFSTMFFS. Residues 665 to 675 are Cytoplasmic-facing; that stretch reads HRENTVSSLGR. The helical transmembrane segment at 676–696 threads the bilayer; sequence FVLIIWLFVVLIINSSYTASL. Residues 697-857 are Extracellular-facing; sequence TSILTIRQLT…SEDSQLSLKS (161 aa). The chain crosses the membrane as a helical span at residues 858 to 878; that stretch reads FWGLFLICGITCFMALTVFFW. Residues 879–959 are Cytoplasmic-facing; it reads RVFWQYQRLL…TSQSQHGEIT (81 aa). Disordered regions lie at residues 893–913 and 936–959; these read DEER…SRAP and KSSK…GEIT. Residues 943–959 are compositionally biased toward low complexity; sequence STQSAAGTSQSQHGEIT.

It belongs to the glutamate-gated ion channel (TC 1.A.10.1) family. In terms of assembly, forms a heteromeric channel with GLR3.2. As to expression, highly expressed in roots and at lower levels in leaves and siliques. Expressed in seedlings, cotyledons, roots (e.g. root hairs, epidermis and cortex cells), stems, leaves (e.g. vascular bundles and hydathodes), and siliques. Expressed in root phloem.

Its subcellular location is the cell membrane. It is found in the plastid. The protein resides in the chloroplast membrane. Glutamate-gated receptor that probably acts as a non-selective cation channel, at least in hypocotyls. Can be triggered by Asn, Ser, Gly and, to a lower extent, Ala, Cys and Glu. May be involved in light-signal transduction and calcium homeostasis via the regulation of calcium influx into cells. Plays an important role in the calcium-based fast transmission of environmental stress. Acts as a negative regulator of lateral root initiation and development. May restrict primordia numbers and position along the root axis by a signaling process originating in the phloem. AtGLR3.4-mediated cytosolic calcium influx may be involved in the regulation of seed germination under salt stress by modulating sodium accumulation through the SOS pathway. The protein is Glutamate receptor 3.4 of Arabidopsis thaliana (Mouse-ear cress).